Here is a 321-residue protein sequence, read N- to C-terminus: Probable pectate lyase A (321 aa).

The N-terminal stretch at 1-18 (MKFVATLIACGLSGLALA) is a signal peptide. Asparagine 93 carries an N-linked (GlcNAc...) asparagine glycan. Residues aspartate 134, aspartate 163, and aspartate 167 each contribute to the Ca(2+) site. Arginine 220 is a catalytic residue. Asparagine 238 is a glycosylation site (N-linked (GlcNAc...) asparagine).

It belongs to the polysaccharide lyase 1 family. It depends on Ca(2+) as a cofactor.

Its subcellular location is the secreted. It catalyses the reaction Eliminative cleavage of (1-&gt;4)-alpha-D-galacturonan to give oligosaccharides with 4-deoxy-alpha-D-galact-4-enuronosyl groups at their non-reducing ends.. Functionally, pectinolytic enzyme consist of four classes of enzymes: pectin lyase, polygalacturonase, pectin methylesterase and rhamnogalacturonase. Among pectinolytic enzymes, pectin lyase is the most important in depolymerization of pectin, since it cleaves internal glycosidic bonds of highly methylated pectins. Favors pectate, the anion, over pectin, the methyl ester. The chain is Probable pectate lyase A (plyA) from Aspergillus fumigatus (strain CBS 144.89 / FGSC A1163 / CEA10) (Neosartorya fumigata).